A 350-amino-acid polypeptide reads, in one-letter code: D-alanine--D-alanine ligase (350 aa).

The region spanning 134–337 (KIFAAQRGVK…LPKKHSIKVS (204 aa)) is the ATP-grasp domain. 160 to 212 (IAYPIILKPARLGSSIGVSVINEEKELDYGRDLAFEYDDTIIAESFKSGVKEY) lines the ATP pocket. Residues aspartate 289, glutamate 301, and asparagine 303 each coordinate Mg(2+).

This sequence belongs to the D-alanine--D-alanine ligase family. Mg(2+) serves as cofactor. Requires Mn(2+) as cofactor.

It is found in the cytoplasm. It catalyses the reaction 2 D-alanine + ATP = D-alanyl-D-alanine + ADP + phosphate + H(+). The protein operates within cell wall biogenesis; peptidoglycan biosynthesis. Functionally, cell wall formation. The polypeptide is D-alanine--D-alanine ligase (Helicobacter hepaticus (strain ATCC 51449 / 3B1)).